The sequence spans 749 residues: Protein lin-54 homolog (749 aa).

Lys139 is covalently cross-linked (Glycyl lysine isopeptide (Lys-Gly) (interchain with G-Cter in SUMO2)). N6-acetyllysine is present on residues Lys244 and Lys249. Residues Ser264, Ser282, Ser310, and Ser314 each carry the phosphoserine modification. A Glycyl lysine isopeptide (Lys-Gly) (interchain with G-Cter in SUMO2) cross-link involves residue Lys357. Residues Ala369–Gln388 form a disordered region. Residues Pro521–Glu634 enclose the CRC domain. A DNA-binding region spans residues Lys523–Tyr536. Positions 525, 527, 532, 537, 539, 546, 549, 551, and 554 each coordinate Zn(2+). Positions Ile583–Ser596 are linker. Zn(2+)-binding residues include Cys599, Cys601, Cys606, Cys611, Cys613, Cys620, Cys624, Cys626, and Cys629. The interval Cys599–Glu612 is DNA-binding. Phosphoserine is present on Ser635. Residues Lys639, Lys659, and Lys661 each participate in a glycyl lysine isopeptide (Lys-Gly) (interchain with G-Cter in SUMO2) cross-link.

Belongs to the lin-54 family. Component of the DREAM complex (also named LINC complex) at least composed of E2F4, E2F5, LIN9, LIN37, LIN52, LIN54, MYBL1, MYBL2, RBL1, RBL2, RBBP4, TFDP1 and TFDP2. The complex exists in quiescent cells where it represses cell cycle-dependent genes. It dissociates in S phase when LIN9, LIN37, LIN52 and LIN54 form a subcomplex that binds to MYBL2.

The protein resides in the nucleus. In terms of biological role, component of the DREAM complex, a multiprotein complex that can both act as a transcription activator or repressor depending on the context. In G0 phase, the complex binds to more than 800 promoters and is required for repression of E2F target genes. In S phase, the complex selectively binds to the promoters of G2/M genes whose products are required for mitosis and participates in their cell cycle dependent activation. In the complex, acts as a DNA-binding protein that binds the promoter of CDK1 in a sequence-specific manner. Specifically recognizes the consensus motif 5'-TTYRAA-3' in target DNA. This chain is Protein lin-54 homolog (LIN54), found in Homo sapiens (Human).